A 179-amino-acid chain; its full sequence is Large ribosomal subunit protein uL5 (179 aa).

This sequence belongs to the universal ribosomal protein uL5 family. Part of the 50S ribosomal subunit; part of the 5S rRNA/L5/L18/L25 subcomplex. Contacts the 5S rRNA and the P site tRNA. Forms a bridge to the 30S subunit in the 70S ribosome.

Its function is as follows. This is one of the proteins that bind and probably mediate the attachment of the 5S RNA into the large ribosomal subunit, where it forms part of the central protuberance. In the 70S ribosome it contacts protein S13 of the 30S subunit (bridge B1b), connecting the 2 subunits; this bridge is implicated in subunit movement. Contacts the P site tRNA; the 5S rRNA and some of its associated proteins might help stabilize positioning of ribosome-bound tRNAs. The chain is Large ribosomal subunit protein uL5 from Citrobacter koseri (strain ATCC BAA-895 / CDC 4225-83 / SGSC4696).